A 563-amino-acid chain; its full sequence is Dicarboxylate transporter 2.1, chloroplastic (563 aa).

A chloroplast-targeting transit peptide spans 1 to 68 (MESFALHSLS…LKPIPRFSTR (68 aa)). 2 disordered regions span residues 16–45 (TLLS…STIS) and 71–92 (AAPQ…PSPQ). Over residues 28-45 (RLSLLRRTSSRSPPSTIS) the composition is skewed to low complexity. A compositionally biased stretch (pro residues) spans 76–90 (NAPPPPPPSPSPSPS). The next 12 helical transmembrane spans lie at 96 to 116 (LIPL…VPVP), 134 to 154 (IAGL…GLTA), 165 to 185 (AAFS…FFFA), 234 to 254 (AGGI…SKPN), 261 to 281 (LGSY…ALFL), 308 to 328 (WFKA…LILY), 358 to 378 (NEWI…CGET), 379 to 399 (LGIP…VLGV), 414 to 434 (TLAW…LGVV), 450 to 470 (LSWP…HYLF), 483 to 503 (AFLA…LALA), and 537 to 557 (IGFV…TFWW).

This sequence belongs to the SLC13A/DASS transporter (TC 2.A.47) family. DIT1 subfamily. Expressed in roots, rosette and cauline leaves, stems, flowers and siliques.

Its subcellular location is the plastid. It localises to the chloroplast inner membrane. Its function is as follows. Glutamate/malate translocator involved with DIT1 in primary ammonia assimilation and in the re-assimilation of ammonia generated by the photorespiratory pathway. Exports the end product of ammonia assimilation, glutamate, from plastids to the cytosol. The precursor for ammonia assimilation, 2-oxoglutarate, is imported from the cytosol by DIT1. This is Dicarboxylate transporter 2.1, chloroplastic (DIT2-1) from Arabidopsis thaliana (Mouse-ear cress).